Here is a 610-residue protein sequence, read N- to C-terminus: ABC transporter ATP-binding protein ARB1 (610 aa).

The tract at residues 1–43 (MPPVSASKAKRDAKKAEREAKKAAAGKTIRKLGRKKEAAAEES) is disordered. Residues serine 43 and serine 65 each carry the phosphoserine modification. ABC transporter domains are found at residues 82–323 (IKLS…TNQM) and 393–610 (LAFD…NVVL). An ATP-binding site is contributed by 114–121 (GENGCGKS). Serine 196 is subject to Phosphoserine. Position 428–435 (428–435 (GPNGVGKS)) interacts with ATP. Threonine 446 carries the post-translational modification Phosphothreonine.

Belongs to the ABC transporter superfamily. ABCF family. EF3 subfamily. As to quaternary structure, interacts with LSG1.

The protein resides in the cytoplasm. It localises to the nucleus. It carries out the reaction ATP + H2O = ADP + phosphate + H(+). Functionally, ATPase that stimulates 40S and 60S ribosome biogenesis. Also involved in ribosome-associated quality control (RQC) pathway, a pathway that mediates ubiquitination and extraction of incompletely synthesized nascent chains for proteasomal degradation: localizes to the ribosomal E-site and stimulates VMS1-dependent tRNA cleavage. This chain is ABC transporter ATP-binding protein ARB1 (ARB1), found in Saccharomyces cerevisiae (strain ATCC 204508 / S288c) (Baker's yeast).